We begin with the raw amino-acid sequence, 953 residues long: MAENAESAERFWGQFHGQNTGYLEQQFELYKEDPELVESSIRTIFDTHGAPSWLSSTENVKSVSNASDFDVTKLTSAIRLVEAIRRYGHTDADIYPVGGYKGDRSKMLDLSTYNLKEQDLEKIPASWIWEKQAPGVATALDVVNQLKKYYTGTITFEYDHVNNDEERKWLFDLIEEGNARLDPSDDERKKILQRLADVEGFEKFLHKTFVGQKRFSIEGLESMVPMIDHIVQYSNQDSIEHVMMGMAHRGRLSVLANVLGKPYDKIFSEFNYTKEKELMPSEGSRAINYGWTGDVKYHYGAEKEVEFGNKGQTRITLAHNPSHLEFVNPVVEGFTRAAQDDRSEKGYPKQVTNKAVSVLIHGDAAFIGEGVVAETLNLSGLPGYSTGGTLHIIANNLLGYTTDREDGRSTRYASDLAKGFEIPVIRVNADDPISCISAIKIAYEYRQKFQKDFLIDLVGYRRYGHNEMDEPRTTQPSLYQQIDDHPSVASLFGKGMEEKGILQEGGFEEVKSAVEKKLTDIYKGMTESEIGEPEAKLMPQVLTNGLDQFTTAIDLATLKSINEELLERPEGFKGFKKTERILQRRKDALEEGNKADWGTGEALAFASILKEGTPIRLTGQDTERGTFAHRHIVLHDVETGEKYSPLHGLSDVEASFDVRNSPLSEAGVLGFEYGYSVQSPDTLVIWEAQFGDFANAGQVIFDQFISSARAKWGEKSNMVLLLPHGYEGQGPEHSSARLERFLQMAAENNWIVANVTSSAQLFHILRRQAAMRDRDEARPLVLMTPKSSLIRHPRMGATAEEFTDGGFLALRDQPGFEANREKVTRLVVGSGKMMIDIEEAMDDSDETYDWLQIKRVEQIYPFPKKALEEEIKQLPNLKEIVWVQEEPKNMGAWNFVDDYLRELLNEDQKLKVISRPDRSAPAGGIPTVHKTAQNKIIKQALNQSEGGKSSAGN.

This sequence belongs to the alpha-ketoglutarate dehydrogenase family. In terms of assembly, homodimer. Part of the 2-oxoglutarate dehydrogenase (OGDH) complex composed of E1 (2-oxoglutarate dehydrogenase), E2 (dihydrolipoamide succinyltransferase) and E3 (dihydrolipoamide dehydrogenase); the complex contains multiple copies of the three enzymatic components (E1, E2 and E3). Requires thiamine diphosphate as cofactor.

It carries out the reaction N(6)-[(R)-lipoyl]-L-lysyl-[protein] + 2-oxoglutarate + H(+) = N(6)-[(R)-S(8)-succinyldihydrolipoyl]-L-lysyl-[protein] + CO2. E1 component of the 2-oxoglutarate dehydrogenase (OGDH) complex which catalyzes the decarboxylation of 2-oxoglutarate, the first step in the conversion of 2-oxoglutarate to succinyl-CoA and CO(2). The chain is 2-oxoglutarate dehydrogenase E1 component from Oceanobacillus iheyensis (strain DSM 14371 / CIP 107618 / JCM 11309 / KCTC 3954 / HTE831).